The sequence spans 413 residues: L-methionine gamma-lyase (413 aa).

Residues 75–77 and 105–106 contribute to the pyridoxal 5'-phosphate site; these read YGR and GM. A substrate-binding site is contributed by Y131. A pyridoxal 5'-phosphate-binding site is contributed by 218-220; sequence SAT. K221 is subject to N6-(pyridoxal phosphate)lysine. Residue R365 participates in substrate binding. A disordered region spans residues 388 to 413; the sequence is RLPETAGAGREPSRTALRLPERAADR.

Belongs to the trans-sulfuration enzymes family. In terms of assembly, homotetramer; dimer of active dimers. Requires pyridoxal 5'-phosphate as cofactor.

The enzyme catalyses L-methionine + H2O = methanethiol + 2-oxobutanoate + NH4(+). It catalyses the reaction L-homocysteine + H2O = 2-oxobutanoate + hydrogen sulfide + NH4(+) + H(+). The catalysed reaction is L-cysteine + H2O = hydrogen sulfide + pyruvate + NH4(+) + H(+). Its function is as follows. Catalyzes the alpha,gamma-elimination of L-methionine to produce methanethiol, 2-oxobutanoate and ammonia. Is probably involved in L-methionine catabolism. Is also able to catalyze the alpha,gamma-elimination of L-homocysteine, and, to a lesser extent, the alpha,beta-elimination of L-cysteine. The chain is L-methionine gamma-lyase from Streptomyces avermitilis (strain ATCC 31267 / DSM 46492 / JCM 5070 / NBRC 14893 / NCIMB 12804 / NRRL 8165 / MA-4680).